A 116-amino-acid chain; its full sequence is Putative iron-sulfur cluster insertion protein ErpA (116 aa).

Iron-sulfur cluster-binding residues include Cys-44, Cys-108, and Cys-110.

This sequence belongs to the HesB/IscA family. Homodimer. The cofactor is iron-sulfur cluster.

Required for insertion of 4Fe-4S clusters. The chain is Putative iron-sulfur cluster insertion protein ErpA from Azoarcus sp. (strain BH72).